A 266-amino-acid chain; its full sequence is Zinc transport system ATP-binding protein TroB (266 aa).

Residues 11-243 (VQVDDLTLAY…YVQRAYGGRI (233 aa)) form the ABC transporter domain. 43 to 50 (GPNGAGKS) is an ATP binding site.

Belongs to the ABC transporter superfamily.

Functionally, part of an ATP-driven transport system TroABCD for zinc. This is Zinc transport system ATP-binding protein TroB (troB) from Treponema pallidum (strain Nichols).